Reading from the N-terminus, the 136-residue chain is MAKSDVKGINLGMGTGRRKSSVARVYIREGKGDIKINSRDFDSYMQLEKLKTIALSPLVLTNTLGKYDLYINIYGGGISGQAGAIRHGIARALFNLDEEHKMILKSNGFLTRDPRKVERKKFGKKKARKSFQFSKR.

Belongs to the universal ribosomal protein uS9 family.

In Borrelia hermsii (strain HS1 / DAH), this protein is Small ribosomal subunit protein uS9.